The following is a 500-amino-acid chain: NAD(P)H-quinone oxidoreductase chain 4, chloroplastic (500 aa).

Transmembrane regions (helical) follow at residues 4–24 (FPWL…LFFL), 31–51 (LIKW…TYAF), 87–107 (IGPI…AWPV), 113–130 (LFHF…GSFS), 134–154 (LLLF…LLSM), 167–187 (FILY…GLGL), 208–228 (ALEI…SPII), 242–262 (HYST…YGLV), 272–292 (AHSI…IYAA), 305–325 (IAYS…SITD), 330–350 (GAIL…FLAG), 386–406 (LALP…GIIT), 416–436 (ILIT…SLSM), and 462–482 (LFVS…PDFV).

It belongs to the complex I subunit 4 family.

The protein resides in the plastid. It is found in the chloroplast thylakoid membrane. The enzyme catalyses a plastoquinone + NADH + (n+1) H(+)(in) = a plastoquinol + NAD(+) + n H(+)(out). It carries out the reaction a plastoquinone + NADPH + (n+1) H(+)(in) = a plastoquinol + NADP(+) + n H(+)(out). In Gossypium barbadense (Sea Island cotton), this protein is NAD(P)H-quinone oxidoreductase chain 4, chloroplastic.